The sequence spans 358 residues: Trace amine-associated receptor 7b (358 aa).

Residues 1 to 47 (MATDNDSFPWDQDSILSSDMFSATSTELCYENLNRSCVRSPYSPGPR) are Extracellular-facing. N-linked (GlcNAc...) asparagine glycans are attached at residues Asn5 and Asn34. Disulfide bonds link Cys37/Cys201 and Cys120/Cys205. Residues 48 to 68 (LILYAVFGFGAALAVCGNLLV) traverse the membrane as a helical segment. At 69–83 (MTSILHFRQLHSPAN) the chain is on the cytoplasmic side. The chain crosses the membrane as a helical span at residues 84–104 (FLVVSLACADFLVGLTVMPFS). Over 105–121 (TVRSVEGCWYFGESYCK) the chain is Extracellular. The helical transmembrane segment at 122–143 (LHTCFDVSFCYCSIFHLCFISV) threads the bilayer. The Cytoplasmic segment spans residues 144-166 (DRYIAVSDPLTYPTRFTAFVSGK). A helical transmembrane segment spans residues 167–187 (CITFSWLLSTIYGFSLLYTGA). The Extracellular segment spans residues 188-212 (NEAGLEDLVSALTCVGGCQLAVNQS). N-linked (GlcNAc...) asparagine glycosylation occurs at Asn210. A helical membrane pass occupies residues 213 to 233 (WVFINFLLFLIPTLVMITVYS). At 234-274 (KIFLIAKQQAQNIEKMSKQTARASDSYKDRVAKRERKAAKT) the chain is on the cytoplasmic side. The chain crosses the membrane as a helical span at residues 275–295 (LGIAVAAFLLSWLPYFIDSII). The Extracellular segment spans residues 296–309 (DAFLGFITPTYVYE). The chain crosses the membrane as a helical span at residues 310–333 (ILVWIAYYNSAMNPLIYAFFYPWF). Residues 334–358 (RKAIKLIVSGKVLRENSSTTNLFPE) are Cytoplasmic-facing.

Belongs to the G-protein coupled receptor 1 family. In terms of tissue distribution, specifically expressed in neurons of the olfactory epithelium.

It is found in the cell membrane. Its function is as follows. Olfactory receptor specific for N,N-dimethylalkylamines trace amines, such as N,N-dimethylcyclohexylamine. Trace amine compounds are enriched in animal body fluids and act on trace amine-associated receptors (TAARs) to elicit both intraspecific and interspecific innate behaviors. Ligand-binding causes a conformation change that triggers signaling via G(s)-class of G alpha proteins (GNAL or GNAS). This is Trace amine-associated receptor 7b from Mus musculus (Mouse).